Consider the following 415-residue polypeptide: Phosphoglycerate kinase (415 aa).

The (2R)-3-phosphoglycerate site is built by V23, D24, F25, N26, Q39, R40, S63, H64, G66, R67, L122, R123, and R170. Residue G213 participates in ADP binding. G213 is a binding site for CDP. Positions 214 and 215 each coordinate AMP. Position 214 (A214) interacts with ATP. A Mg(2+)-binding site is contributed by A214. D218 serves as a coordination point for CDP. D218 provides a ligand contact to Mg(2+). An AMP-binding site is contributed by K219. Residue K219 participates in ATP binding. Residue G237 participates in ADP binding. A CDP-binding site is contributed by G237. AMP-binding residues include G238 and G311. Residues G238 and G311 each contribute to the ATP site. The CDP site is built by G336 and F341. F341 serves as a coordination point for ADP. E342 serves as a coordination point for AMP. The ATP site is built by E342, D373, and T374. D373 is a Mg(2+) binding site.

It belongs to the phosphoglycerate kinase family. In terms of assembly, monomer. The cofactor is Mg(2+).

It localises to the cytoplasm. The protein localises to the mitochondrion. The catalysed reaction is (2R)-3-phosphoglycerate + ATP = (2R)-3-phospho-glyceroyl phosphate + ADP. Its pathway is carbohydrate degradation; glycolysis; pyruvate from D-glyceraldehyde 3-phosphate: step 2/5. Catalyzes one of the two ATP producing reactions in the glycolytic pathway via the reversible conversion of 1,3-diphosphoglycerate to 3-phosphoglycerate. Both L- and D- forms of purine and pyrimidine nucleotides can be used as substrates, but the activity is much lower on pyrimidines. Negatively regulates the biosynthesis of acetyl-CoA from pyruvate in the mitochondrion. The chain is Phosphoglycerate kinase (PGKA) from Penicillium chrysogenum (Penicillium notatum).